Here is a 206-residue protein sequence, read N- to C-terminus: Pyridoxine/pyridoxamine 5'-phosphate oxidase (206 aa).

Residues 49 to 54 (RMVLLK), 69 to 70 (YT), Lys-76, and Gln-98 contribute to the FMN site. Lys-54 lines the substrate pocket. Substrate-binding residues include Tyr-116, Arg-120, and Ser-124. FMN-binding positions include 133-134 (QS) and Trp-177. 183–185 (RLH) contributes to the substrate binding site. Arg-187 is a binding site for FMN.

It belongs to the pyridoxamine 5'-phosphate oxidase family. In terms of assembly, homodimer. FMN is required as a cofactor.

The enzyme catalyses pyridoxamine 5'-phosphate + O2 + H2O = pyridoxal 5'-phosphate + H2O2 + NH4(+). It carries out the reaction pyridoxine 5'-phosphate + O2 = pyridoxal 5'-phosphate + H2O2. Its pathway is cofactor metabolism; pyridoxal 5'-phosphate salvage; pyridoxal 5'-phosphate from pyridoxamine 5'-phosphate: step 1/1. The protein operates within cofactor metabolism; pyridoxal 5'-phosphate salvage; pyridoxal 5'-phosphate from pyridoxine 5'-phosphate: step 1/1. Catalyzes the oxidation of either pyridoxine 5'-phosphate (PNP) or pyridoxamine 5'-phosphate (PMP) into pyridoxal 5'-phosphate (PLP). This Jannaschia sp. (strain CCS1) protein is Pyridoxine/pyridoxamine 5'-phosphate oxidase.